The chain runs to 194 residues: Large ribosomal subunit protein uL6m (194 aa).

It belongs to the universal ribosomal protein uL6 family.

It is found in the mitochondrion. This Prototheca wickerhamii protein is Large ribosomal subunit protein uL6m (RPL6).